A 269-amino-acid polypeptide reads, in one-letter code: Phosphate import ATP-binding protein PstB (269 aa).

An ABC transporter domain is found at 14–253 (LTLEDVSISY…EFDSTKKIFS (240 aa)). 46–53 (GPSGCGKS) is a binding site for ATP.

It belongs to the ABC transporter superfamily. Phosphate importer (TC 3.A.1.7) family. As to quaternary structure, the complex is composed of two ATP-binding proteins (PstB), two transmembrane proteins (PstC and PstA) and a solute-binding protein (PstS).

The protein resides in the cell inner membrane. It carries out the reaction phosphate(out) + ATP + H2O = ADP + 2 phosphate(in) + H(+). Its function is as follows. Part of the ABC transporter complex PstSACB involved in phosphate import. Responsible for energy coupling to the transport system. This is Phosphate import ATP-binding protein PstB from Prochlorococcus marinus subsp. pastoris (strain CCMP1986 / NIES-2087 / MED4).